The sequence spans 427 residues: Enolase (427 aa).

Gln163 contributes to the (2R)-2-phosphoglycerate binding site. Residue Glu205 is the Proton donor of the active site. 3 residues coordinate Mg(2+): Asp242, Glu283, and Asp310. Lys335, Arg364, Ser365, and Lys386 together coordinate (2R)-2-phosphoglycerate. Lys335 functions as the Proton acceptor in the catalytic mechanism.

Belongs to the enolase family. Mg(2+) serves as cofactor.

Its subcellular location is the cytoplasm. The protein resides in the secreted. The protein localises to the cell surface. It carries out the reaction (2R)-2-phosphoglycerate = phosphoenolpyruvate + H2O. It functions in the pathway carbohydrate degradation; glycolysis; pyruvate from D-glyceraldehyde 3-phosphate: step 4/5. Functionally, catalyzes the reversible conversion of 2-phosphoglycerate (2-PG) into phosphoenolpyruvate (PEP). It is essential for the degradation of carbohydrates via glycolysis. This chain is Enolase, found in Salinispora arenicola (strain CNS-205).